The primary structure comprises 204 residues: LexA repressor (204 aa).

A DNA-binding region (H-T-H motif) is located at residues 31 to 51 (VREIGQAVGLKSSSTVHTHLV). Residues Ser-128 and Lys-165 each act as for autocatalytic cleavage activity in the active site.

Belongs to the peptidase S24 family. As to quaternary structure, homodimer.

The catalysed reaction is Hydrolysis of Ala-|-Gly bond in repressor LexA.. Functionally, represses a number of genes involved in the response to DNA damage (SOS response), including recA and lexA. In the presence of single-stranded DNA, RecA interacts with LexA causing an autocatalytic cleavage which disrupts the DNA-binding part of LexA, leading to derepression of the SOS regulon and eventually DNA repair. The polypeptide is LexA repressor (Syntrophomonas wolfei subsp. wolfei (strain DSM 2245B / Goettingen)).